The primary structure comprises 333 residues: Acetyltransferase Pat (333 aa).

Residues Gly85–Ala88, Arg95–Thr96, and Arg135 contribute to the 3',5'-cyclic AMP site. Residues Phe153–Ile317 enclose the N-acetyltransferase domain. Glu211 provides a ligand contact to Mg(2+). Residues Phe237–Val239, Gly245–Ser250, Asn276, and Arg285 each bind substrate.

Homodimer. It depends on Mg(2+) as a cofactor.

Allosterically regulated by cAMP. Its function is as follows. Catalyzes specifically the acetylation of the epsilon-amino group of a highly conserved lysine residue in acetyl-CoA synthetase (ACS) and of the universal stress protein (USP) MSMEG_4207. Acetylation results in the inactivation of ACS activity and could be important for mycobacteria to adjust to environmental changes. This is Acetyltransferase Pat from Mycolicibacterium smegmatis (strain ATCC 700084 / mc(2)155) (Mycobacterium smegmatis).